The following is a 497-amino-acid chain: MSDLFATITTPNGVKYEQPLGLFIDGEFVKGAEGKTFETINPSNEKPIVAVHEATEKDVDTAVAAARKAFEGSWRQVTPSTRGRMLTKLADLFERDAEILASIEALDNGKSITMAHGDIAGAAGCLRYYGGWADKIHGQTIDTNSETLNYTRHEPIGVCGQIIPWNFPLLMWAWKIGPAIATGNTVVIKTAEQTPLSGLYAANVIKEAGIPAGVVNVISGFGRVAGSAISHHMDIDKVAFTGSTLVGRTILQAAAKSNLKKVTLELGGKSPNIVFNDADIDNAISWANFGIFYNHGQCCCAGSRILVQEGIYDKFIARLKERALQNKVGDPFAKDTFQGPQVSQLQFDRIMEYIQHGKDAGATVAVGGERHGTEGYFIQPTVFTDVTSDMKINQEEIFGPVVTVQKFKDVEDAIKIGNSTSYGLAAGIHTKDVTTAIRVSNALRAGTVWVNSYNLIQYQVPFGGFKESGIGRELGSYALENYTQIKAVHYRLGDALF.

Position 242–247 (242–247 (GSTLVG)) interacts with NAD(+). Residue Glu265 is the Proton acceptor of the active site. Cys299 functions as the Nucleophile in the catalytic mechanism.

The protein belongs to the aldehyde dehydrogenase family.

It carries out the reaction an aldehyde + NAD(+) + H2O = a carboxylate + NADH + 2 H(+). Its pathway is alcohol metabolism; ethanol degradation; acetate from ethanol: step 2/2. This chain is Aldehyde dehydrogenase (aldA), found in Aspergillus niger.